Reading from the N-terminus, the 109-residue chain is SIAFSRAVFTEFLATLLFVFFGLGSALNWPQALPSVLQIAMAFGLAIGTLVQMLGHISGAHINPAVTVACLVGCHISFLRAAFYVAAQLLGAVAGAALLHEVTPPSIRG.

Over 1–6 (SIAFSR) the chain is Cytoplasmic. The helical transmembrane segment at 7–27 (AVFTEFLATLLFVFFGLGSAL) threads the bilayer. At 28-35 (NWPQALPS) the chain is on the extracellular side. Residues 36 to 54 (VLQIAMAFGLAIGTLVQML) traverse the membrane as a helical segment. Over 55 to 59 (GHISG) the chain is Cytoplasmic. An intramembrane region (discontinuously helical) is located at residues 60–69 (AHINPAVTVA). The NPA 1 signature appears at 63-65 (NPA). At 70–80 (CLVGCHISFLR) the chain is on the cytoplasmic side. Residues 81 to 102 (AAFYVAAQLLGAVAGAALLHEV) form a helical membrane-spanning segment. Residues 103-109 (TPPSIRG) are Extracellular-facing.

This sequence belongs to the MIP/aquaporin (TC 1.A.8) family. As to quaternary structure, homotetramer. Serine phosphorylation is necessary and sufficient for expression at the apical membrane. Endocytosis is not phosphorylation-dependent. In terms of processing, N-glycosylated.

The protein resides in the apical cell membrane. It is found in the basolateral cell membrane. Its subcellular location is the cell membrane. It localises to the cytoplasmic vesicle membrane. The protein localises to the golgi apparatus. The protein resides in the trans-Golgi network membrane. The enzyme catalyses H2O(in) = H2O(out). It catalyses the reaction glycerol(in) = glycerol(out). Forms a water-specific channel that provides the plasma membranes of renal collecting duct with high permeability to water, thereby permitting water to move in the direction of an osmotic gradient. Plays an essential role in renal water homeostasis. Could also be permeable to glycerol. The chain is Aquaporin-2 from Erinaceus europaeus (Western European hedgehog).